The primary structure comprises 737 residues: ARMADILLO BTB ARABIDOPSIS PROTEIN 1 (737 aa).

ARM repeat units lie at residues 112 to 154, 165 to 212, 215 to 254, 257 to 296, 299 to 338, 341 to 380, 382 to 421, 456 to 495, and 497 to 536; these read DENV…KDCA, PGYQ…NIAH, PRIKTNIRVEGGIAPLVELLNFPDVKVQRAAAGALRTVSF, DENKSQIVELNALPTLVLMLQSQDSTVHGEAIGAIGNLVH, PDIKKEVIRAGALQPVIGLLSSTCLETQREAALLIGQFAA, SDCKVHIAQRGAITPLIKMLESSDEQVVEMSAFALGRLAQ, AHNQAGIAHRGGIISLLNLLDVKTGSVQHNAAFALYGLAD, LKRLQNKIHGPVLNQLLYLMRTAEKTVQIRIALALAHLCD, and KDGKLIFIDNNGVEFLLELLYFSSNKQQRYSSSALYELAK. The BTB domain maps to 568 to 635; it reads SDVTFLIDGK…IYSGRINIAK (68 aa).

As to quaternary structure, forms a heterodimeric complex with TCP24. Interacts with the origin recognition complex (preRC) components ORC1A, ORC1B, CDT1A and CDT1B. Interacts with DUF7/AIP1. Weakly expressed in the emerging lateral roots and mainly expressed in the shoot apex, young leaves and flower buds.

The protein localises to the nucleus. The protein operates within protein modification; protein ubiquitination. Its function is as follows. May act as a substrate-specific adapter of an E3 ubiquitin-protein ligase complex (CUL3-RBX1-BTB) which mediates the ubiquitination and subsequent proteasomal degradation of target proteins. In association with TCP24, exerts a negative role in cell proliferation in leaves, possibly by inhibiting mitotic DNA replication. The polypeptide is ARMADILLO BTB ARABIDOPSIS PROTEIN 1 (ABAP1) (Arabidopsis thaliana (Mouse-ear cress)).